The chain runs to 1335 residues: Mediator of RNA polymerase II transcription subunit 15a (1335 aa).

Disordered stretches follow at residues 1–27, 109–172, 190–225, 241–389, 401–448, 496–525, 567–591, and 683–815; these read MDNNNWRPSLPNGEPAMDTGDWRTQLP, GTSI…NNNT, QDSSGQHGLSSNMFSGPQRQMLGRPHAMSSQQQQQP, FQSG…QHQQ, IQQQ…TQSN, LYSSQGQQSQNQPSQQQMMPQLQSHHQQLG, SQRTLPEMPSSSLDSTAQTESANGG, and HRPR…QSNV. Composition is skewed to polar residues over residues 110–158, 190–207, and 241–257; these read TSID…TALP, QDSSGQHGLSSNMFSGPQ, and FQSGNVPNPNSLLPSHI. Low complexity predominate over residues 258–270; sequence QQQQQNVLQPNQL. Residues 271–299 show a composition bias toward polar residues; that stretch reads HSSQQPGVPTSATQPSTVNSAPLQGLHTN. Residues 300-314 are compositionally biased toward low complexity; that stretch reads QQSSPQLSSQQTTQS. Positions 315–328 are enriched in polar residues; the sequence is MLRQHQSSMLRQHP. Over residues 329–362 the composition is skewed to low complexity; that stretch reads QSQQASGIHQQQSSLPQQSISPLQQQPTQLMRQQ. Over residues 363 to 374 the composition is skewed to polar residues; that stretch reads AANSSGIQQKQM. Low complexity predominate over residues 401 to 436; that stretch reads IQQQQSQQQPLQQPQQQQKQQPPAQQQLMSQQNSLQ. Positions 437-448 are enriched in polar residues; the sequence is ATHQNPLGTQSN. A compositionally biased stretch (low complexity) spans 498–525; it reads SSQGQQSQNQPSQQQMMPQLQSHHQQLG. Over residues 567-588 the composition is skewed to polar residues; sequence SQRTLPEMPSSSLDSTAQTESA. Low complexity predominate over residues 688–712; sequence PVQQGQLPQSQMQPMQQPQSQTVQD. 3 stretches are compositionally biased toward polar residues: residues 716-728, 735-749, and 756-815; these read DNQTNPQMQSMSM, AQQSSMTNMQSNVLS, and APQQ…QSNV. A coiled-coil region spans residues 834–882; it reads QDQQMQLKQQFQQRQMQQQQLQARQQQQQQQLQARQQAAQLQQMNDMND. Disordered regions lie at residues 947 to 986 and 1146 to 1165; these read KMGTPLQPANSPFVVPSPSSTPLAPSPMQVDSEKPGSSSL and FAGSETSDLESTATSDGKKA. Residues 957 to 973 are compositionally biased toward low complexity; sequence SPFVVPSPSSTPLAPSP. Over residues 1148–1160 the composition is skewed to polar residues; it reads GSETSDLESTATS.

The protein belongs to the plant Mediator complex subunit 15 family. In terms of assembly, component of the Mediator complex.

It localises to the nucleus. Its function is as follows. Component of the Mediator complex, a coactivator involved in the regulated transcription of nearly all RNA polymerase II-dependent genes. Mediator functions as a bridge to convey information from gene-specific regulatory proteins to the basal RNA polymerase II transcription machinery. The Mediator complex, having a compact conformation in its free form, is recruited to promoters by direct interactions with regulatory proteins and serves for the assembly of a functional preinitiation complex with RNA polymerase II and the general transcription factors. In Arabidopsis thaliana (Mouse-ear cress), this protein is Mediator of RNA polymerase II transcription subunit 15a (MED15A).